Consider the following 269-residue polypeptide: Putative pyruvate, phosphate dikinase regulatory protein (269 aa).

An ADP-binding site is contributed by 147–154; sequence GVSRSSKT.

This sequence belongs to the pyruvate, phosphate/water dikinase regulatory protein family. PDRP subfamily.

The enzyme catalyses N(tele)-phospho-L-histidyl/L-threonyl-[pyruvate, phosphate dikinase] + ADP = N(tele)-phospho-L-histidyl/O-phospho-L-threonyl-[pyruvate, phosphate dikinase] + AMP + H(+). It carries out the reaction N(tele)-phospho-L-histidyl/O-phospho-L-threonyl-[pyruvate, phosphate dikinase] + phosphate + H(+) = N(tele)-phospho-L-histidyl/L-threonyl-[pyruvate, phosphate dikinase] + diphosphate. Its function is as follows. Bifunctional serine/threonine kinase and phosphorylase involved in the regulation of the pyruvate, phosphate dikinase (PPDK) by catalyzing its phosphorylation/dephosphorylation. This chain is Putative pyruvate, phosphate dikinase regulatory protein, found in Trichlorobacter lovleyi (strain ATCC BAA-1151 / DSM 17278 / SZ) (Geobacter lovleyi).